We begin with the raw amino-acid sequence, 272 residues long: uncharacterized protein (272 aa).

An HTH merR-type domain is found at 1-27; the sequence is MDTLAFINRALVEEGYSLKDIKLVLIT.

This is an uncharacterized protein from Aquifex aeolicus (strain VF5).